A 570-amino-acid polypeptide reads, in one-letter code: Frizzled-2 (570 aa).

Positions 1–28 are cleaved as a signal peptide; sequence MRARSALPRSALPRLLLPLLLLPAAGPA. Over 29 to 252 the chain is Extracellular; that stretch reads QFHGEKGISI…QEETRFARLW (224 aa). The 120-residue stretch at 39-158 folds into the FZ domain; sequence PDHGFCQPIS…HGAEQICVGQ (120 aa). 5 disulfides stabilise this stretch: cysteine 44-cysteine 105, cysteine 52-cysteine 98, cysteine 89-cysteine 126, cysteine 115-cysteine 155, and cysteine 119-cysteine 143. N-linked (GlcNAc...) asparagine glycosylation is present at asparagine 58. The N-linked (GlcNAc...) asparagine glycan is linked to asparagine 159. The interval 166-194 is disordered; sequence PALLTTAPPSGLQPGAGGTPGGPGGGGSP. Over residues 179-193 the composition is skewed to gly residues; it reads PGAGGTPGGPGGGGS. Residues 253 to 273 form a helical membrane-spanning segment; sequence ILTWSVLCCASTFFTVTTYLV. At 274-284 the chain is on the cytoplasmic side; sequence DMQRFRYPERP. Residues 285 to 305 traverse the membrane as a helical segment; it reads IIFLSGCYTMVSVAYIAGFVL. Residues 306-332 are Extracellular-facing; it reads QERVVCNERFSEDGYRTVVQGTKKEGC. A helical membrane pass occupies residues 333 to 353; the sequence is TILFMMLYFFSMASSIWWVIL. Topologically, residues 354-375 are cytoplasmic; it reads SLTWFLAAGMKWGHEAIEANSQ. The helical transmembrane segment at 376–396 threads the bilayer; it reads YFHLAAWAVPAVKTITILAMG. Topologically, residues 397–419 are extracellular; it reads QIDGDLLSGVCFVGLNSLDPLRG. A helical transmembrane segment spans residues 420–440; the sequence is FVLAPLFVYLFIGTSFLLAGF. Topologically, residues 441 to 466 are cytoplasmic; that stretch reads VSLFRIRTIMKHDGTKTEKLERLMVR. A helical membrane pass occupies residues 467–487; it reads IGVFSVLYTVPATIVIACYFY. Over 488–524 the chain is Extracellular; the sequence is EQAFREHWERSWVSQHCKSLAIPCPAHYTPRMSPDFT. A helical membrane pass occupies residues 525–545; sequence VYMIKYLMTLIVGITSGFWIW. Residues 546-570 are Cytoplasmic-facing; that stretch reads SGKTLHSWRKFYTRLTNSRHGETTV. A Lys-Thr-X-X-X-Trp motif, mediates interaction with the PDZ domain of Dvl family members motif is present at residues 548 to 553; it reads KTLHSW. A PDZ-binding motif is present at residues 568–570; it reads TTV.

This sequence belongs to the G-protein coupled receptor Fz/Smo family. Post-translationally, ubiquitinated by ZNRF3, leading to its degradation by the proteasome. Expressed in embryonic and adult heart, lung, chondrocytes and brain. Also expressed in the developing gastrointestinal tract (strongest in foregut), much weaker expression in the adult. No expression in fetal liver and adult spleen. Up-regulated in esophageal squamous cell carcinomas.

It is found in the membrane. Its subcellular location is the cell membrane. Functionally, receptor for Wnt proteins. Most of frizzled receptors are coupled to the beta-catenin canonical signaling pathway, which leads to the activation of disheveled proteins, inhibition of GSK-3 kinase, nuclear accumulation of beta-catenin and activation of Wnt target genes. A second signaling pathway involving PKC and calcium fluxes has been seen for some family members, but it is not yet clear if it represents a distinct pathway or if it can be integrated in the canonical pathway, as PKC seems to be required for Wnt-mediated inactivation of GSK-3 kinase. Both pathways seem to involve interactions with G-proteins. May be involved in transduction and intercellular transmission of polarity information during tissue morphogenesis and/or in differentiated tissues. This Mus musculus (Mouse) protein is Frizzled-2 (Fzd2).